Here is a 388-residue protein sequence, read N- to C-terminus: MREYAVFTSESVSEGHPDKMADQISDAILDAILKEDPYARVACETLVKTGAVVLAGEITTTANIDVEAVVRQTVNGIGYHHSDLGFDGSTCAVINMIGKQSPEIAQGVDRQKPEDQGAGDQGLMFGYASRETDVLMPAPISYAHRLMERQAELRRSGALPWLRPDAKSQVTFAYENGKPVRLDAVVLSTQHDPEITQTQLKEAVIEEIIKPIIPAEMFHAATKFHINPTGMFVIGGPVGDCGLTGRKIIVDTYGGMARHGGGAFSGKDPSKVDRSAAYAGRYVAKNIVAAGLADKCEIQVSYAIGVAEPTSISINTFGTAKVSDELIIQLVREHFDLRPFGITRMLNLIQPMYKQTAAYGHFGREGSDTAFTWEKTDKVEALKDAAGL.

Histidine 16 contacts ATP. Residue aspartate 18 coordinates Mg(2+). Glutamate 44 provides a ligand contact to K(+). Residues glutamate 57 and glutamine 100 each coordinate L-methionine. Residues 100–110 are flexible loop; that stretch reads QSPEIAQGVDR. Residues 165–167, aspartate 240, 246–247, alanine 263, and lysine 267 contribute to the ATP site; these read DAK and RK. Aspartate 240 provides a ligand contact to L-methionine. Lysine 271 lines the L-methionine pocket.

This sequence belongs to the AdoMet synthase family. Homotetramer; dimer of dimers. Mg(2+) serves as cofactor. The cofactor is K(+).

The protein resides in the cytoplasm. The enzyme catalyses L-methionine + ATP + H2O = S-adenosyl-L-methionine + phosphate + diphosphate. It participates in amino-acid biosynthesis; S-adenosyl-L-methionine biosynthesis; S-adenosyl-L-methionine from L-methionine: step 1/1. Functionally, catalyzes the formation of S-adenosylmethionine (AdoMet) from methionine and ATP. The overall synthetic reaction is composed of two sequential steps, AdoMet formation and the subsequent tripolyphosphate hydrolysis which occurs prior to release of AdoMet from the enzyme. The chain is S-adenosylmethionine synthase from Acinetobacter baumannii (strain ACICU).